A 359-amino-acid chain; its full sequence is MALNSSTEDGIKRIQDDCPRAGRHSYIFVMIPTLYSIIFVVGIFGNSLVVIVIYFYMKLKTVASVFLLNLALADLCFLLTLPLWAVYTAMEYRWPFGNHLCKIASASVSFNLYASVFLLTCLSIDRYLAIVHPMKSRLRRTMLVAKVTCIIIWLMAGLASLPAVIHRNVYFIENTNITVCAFHYESRNSTLPIGLGLTKNILGFLFPFLIILTSYTLIWKALKKAYEIQKNKPRNDDIFRIIMAIVLFFFFSWVPHQIFTFLDVLIQLGVIHDCKIADIVDTAMPITICIAYFNNCLNPLFYGFLGKKFKKYFLQLLKYIPPKAKSHSSLSTKMSTLSYRPSDNMSSAAKKPASCSEVE.

Residues 1–25 (MALNSSTEDGIKRIQDDCPRAGRHS) are Extracellular-facing. A glycan (N-linked (GlcNAc...) asparagine) is linked at asparagine 4. Angiotensin II contacts are provided by glutamine 15 and aspartate 17. Disulfide bonds link cysteine 18-cysteine 274 and cysteine 101-cysteine 180. A helical membrane pass occupies residues 26 to 55 (YIFVMIPTLYSIIFVVGIFGNSLVVIVIYF). The Cytoplasmic portion of the chain corresponds to 56–61 (YMKLKT). A helical membrane pass occupies residues 62-89 (VASVFLLNLALADLCFLLTLPLWAVYTA). Residues 90–98 (MEYRWPFGN) lie on the Extracellular side of the membrane. The chain crosses the membrane as a helical span at residues 99 to 125 (HLCKIASASVSFNLYASVFLLTCLSID). Residues 126–141 (RYLAIVHPMKSRLRRT) are Cytoplasmic-facing. The chain crosses the membrane as a helical span at residues 142-165 (MLVAKVTCIIIWLMAGLASLPAVI). At 166 to 190 (HRNVYFIENTNITVCAFHYESRNST) the chain is on the extracellular side. Arginine 167 serves as a coordination point for angiotensin II. The N-linked (GlcNAc...) asparagine glycan is linked to asparagine 176. Residues phenylalanine 182, histidine 183, and tyrosine 184 each coordinate angiotensin II. Residue asparagine 188 is glycosylated (N-linked (GlcNAc...) asparagine). A helical transmembrane segment spans residues 191 to 216 (LPIGLGLTKNILGFLFPFLIILTSYT). An angiotensin II-binding site is contributed by lysine 199. The Cytoplasmic portion of the chain corresponds to 217–239 (LIWKALKKAYEIQKNKPRNDDIF). A helical membrane pass occupies residues 240–268 (RIIMAIVLFFFFSWVPHQIFTFLDVLIQL). Residues 269–278 (GVIHDCKIAD) lie on the Extracellular side of the membrane. Residues 279–304 (IVDTAMPITICIAYFNNCLNPLFYGF) form a helical membrane-spanning segment. At 305–359 (LGKKFKKYFLQLLKYIPPKAKSHSSLSTKMSTLSYRPSDNMSSAAKKPASCSEVE) the chain is on the cytoplasmic side. Positions 335–347 (STLSYRPSDNMSS) are enriched in polar residues. Positions 335 to 359 (STLSYRPSDNMSSAAKKPASCSEVE) are disordered. Cysteine 355 carries the S-palmitoyl cysteine lipid modification.

Belongs to the G-protein coupled receptor 1 family. In terms of assembly, interacts with MAS1. Interacts with ARRB1. Interacts with FLNA (via filamin repeat 21); increases PKA-mediated phosphorylation of FLNA. In terms of processing, C-terminal Ser or Thr residues may be phosphorylated.

It is found in the cell membrane. Its function is as follows. Receptor for angiotensin II, a vasoconstricting peptide, which acts as a key regulator of blood pressure and sodium retention by the kidney. The activated receptor in turn couples to G-alpha proteins G(q) (GNAQ, GNA11, GNA14 or GNA15) and thus activates phospholipase C and increases the cytosolic Ca(2+) concentrations, which in turn triggers cellular responses such as stimulation of protein kinase C. In Mus musculus (Mouse), this protein is Type-1 angiotensin II receptor A (Agtr1a).